A 196-amino-acid chain; its full sequence is Probable nicotinate-nucleotide adenylyltransferase (196 aa).

It belongs to the NadD family.

The catalysed reaction is nicotinate beta-D-ribonucleotide + ATP + H(+) = deamido-NAD(+) + diphosphate. The protein operates within cofactor biosynthesis; NAD(+) biosynthesis; deamido-NAD(+) from nicotinate D-ribonucleotide: step 1/1. In terms of biological role, catalyzes the reversible adenylation of nicotinate mononucleotide (NaMN) to nicotinic acid adenine dinucleotide (NaAD). This is Probable nicotinate-nucleotide adenylyltransferase from Caldicellulosiruptor saccharolyticus (strain ATCC 43494 / DSM 8903 / Tp8T 6331).